A 309-amino-acid polypeptide reads, in one-letter code: Elongator complex protein 5 (309 aa).

S3 and S4 each carry phosphoserine.

The protein belongs to the ELP5 family. As to quaternary structure, component of the elongator complex, which consists of ELP1/IKI3, ELP2, ELP3, ELP4, ELP5/IKI1 and ELP6. The elongator complex is composed of two copies of the Elp123 subcomplex (composed of ELP1/IKI3, ELP2 and ELP3) and two copies of the Elp456 subcomplex (composed of ELP4, ELP5/IKI1 and ELP6). The Elp123 subcomplex forms a two-lobed scaffold, which binds the Elp456 subcomplex asymmetrically. In each lobe, ELP2 is tightly sandwiched between ELP1/IKI3 and ELP3. The Elp123 subcomplex binds tRNA through ELP1/IKI3 and ELP3 and can bind 2 tRNAs simultaneously. tRNA-binding by the Elp123 subcomplex induces conformational rearrangements which precisely position the targeted anticodon base in the active site. The Elp456 subcomplex binds tRNA and has ATPase activity. Interacts with KTI11/DPH3.

It localises to the cytoplasm. The protein resides in the nucleus. It participates in tRNA modification; 5-methoxycarbonylmethyl-2-thiouridine-tRNA biosynthesis. Its function is as follows. Component of the elongator complex which is required for multiple tRNA modifications, including mcm5U (5-methoxycarbonylmethyl uridine), mcm5s2U (5-methoxycarbonylmethyl-2-thiouridine), and ncm5U (5-carbamoylmethyl uridine). The elongator complex catalyzes formation of carboxymethyluridine in the wobble base at position 34 in tRNAs. It functions as a gamma-toxin target (TOT); disruption of the complex confers resistance to Kluyveromyces lactis toxin zymocin (pGKL1 killer toxin). May also be involved in sensitivity to Pichia inositovora toxin. The chain is Elongator complex protein 5 (IKI1) from Saccharomyces cerevisiae (strain ATCC 204508 / S288c) (Baker's yeast).